The sequence spans 279 residues: Movement protein (279 aa).

Residues 256–266 (PPIAIGSPSAS) are compositionally biased toward low complexity. Residues 256–279 (PPIAIGSPSASRNNSFRSQVVNGL) are disordered. Positions 267 to 279 (RNNSFRSQVVNGL) are enriched in polar residues.

It belongs to the cucumovirus movement protein family.

It localises to the host cell junction. The protein localises to the host plasmodesma. Its function is as follows. Transports viral genome to neighboring plant cells directly through plasmosdesmata, without any budding. The movement protein allows efficient cell to cell propagation, by bypassing the host cell wall barrier. Acts by forming a tubular structure at the host plasmodesmata, enlarging it enough to allow free passage of virion capsids. The protein is Movement protein of Cucumis sativus (Cucumber).